Here is a 714-residue protein sequence, read N- to C-terminus: NCK-interacting protein with SH3 domain (714 aa).

In terms of domain architecture, SH3 spans 1 to 58 (MYRALYAFRSAEPNAMAFAAGETFLVLERSSTHWWLAARARSGETGYVPPAYLHRLQG). Disordered stretches follow at residues 103–126 (TLSR…DHHL) and 139–298 (RTGF…AAET). The segment covering 106-121 (RRGTSASSATVMTPST) has biased composition (polar residues). S120 carries the phosphoserine modification. A Nuclear localization signal motif is present at residues 168–185 (RRAAPTTPPPPVKRRDRE). Phosphothreonine is present on T174. Residues 200–215 (SGGSSVSSGSSASSTS) are compositionally biased toward low complexity. Over residues 216 to 226 (MDTLYTGSSPS) the composition is skewed to polar residues. Residues 252–263 (QPSPSKAPSPEP) show a composition bias toward pro residues. Phosphoserine is present on residues S260, S286, and S673.

As to quaternary structure, associates with the intermediate filaments, vimentin and desmin. Binds the first and third SH3 domains of NCK. Binds the proline-rich domains of N-WASP through its SH3 domain. Similarly, binds diaphanous protein homolog 1 (DRF1). Binds the SH3 domains of GRB2 through its proline-rich domains. Interacts with FASLG.

It localises to the nucleus. Has an important role in stress fiber formation induced by active diaphanous protein homolog 1 (DRF1). Induces microspike formation, in vivo. In vitro, stimulates N-WASP-induced ARP2/3 complex activation in the absence of CDC42. May play an important role in the maintenance of sarcomere and/or in the assembly of myofibrils into sarcomeres. Implicated in regulation of actin polymerization and cell adhesion. In Mus musculus (Mouse), this protein is NCK-interacting protein with SH3 domain (Nckipsd).